Consider the following 115-residue polypeptide: Large ribosomal subunit protein bL19 (115 aa).

This sequence belongs to the bacterial ribosomal protein bL19 family.

Functionally, this protein is located at the 30S-50S ribosomal subunit interface and may play a role in the structure and function of the aminoacyl-tRNA binding site. This Clostridium perfringens (strain ATCC 13124 / DSM 756 / JCM 1290 / NCIMB 6125 / NCTC 8237 / Type A) protein is Large ribosomal subunit protein bL19.